The sequence spans 179 residues: TM2 domain-containing protein Y66D12A.21 (179 aa).

Positions 1 to 18 (MRQLLLTLSLISVSASDA) are cleaved as a signal peptide. The Extracellular segment spans residues 19–82 (TVKCDDLDPN…IFNRTVPSAC (64 aa)). Asn75 is a glycosylation site (N-linked (GlcNAc...) asparagine). Residues 83–105 (HYGAHVSYTTTVLLSIFLGFFGI) form a helical membrane-spanning segment. Residues 88–135 (VSYTTTVLLSIFLGFFGIDRIYLGYYALGLIKMFSLGGLFVFWLVDII) form the TM2 domain. Over 106-109 (DRIY) the chain is Cytoplasmic. A helical membrane pass occupies residues 110–132 (LGYYALGLIKMFSLGGLFVFWLV). Over 133 to 179 (DIILISLQLLGPADGTAYAMAYYGPKAQMIRFDSHTNFSFYTCDGCL) the chain is Extracellular. An N-linked (GlcNAc...) asparagine glycan is attached at Asn169.

It belongs to the TM2 family.

The protein resides in the membrane. This Caenorhabditis elegans protein is TM2 domain-containing protein Y66D12A.21.